A 337-amino-acid chain; its full sequence is MRRGWKMALSGGLRCCRRVLSWVPVLVIVLVVLWSYYAYVFELCLVTVLSPAEKVIYLILYHAIFVFFAWTYWKSIFTLPQQPNQKFHLSYTDKERYKNEERPEVQKQMLVDMAKKLPVYTRTGSGAVRFCDRCHLIKPDRCHHCSVCAMCVLKMDHHCPWVNNCIGFSNYKFFLQFLAYSVLYCLYIATTVFSYFIKYWRGELPSVRSKFHVLFLLFVACMFFVSLVILFGYHCWLVSRNKTTLEAFCTPVFTSGPEKNGFNLGFIKNIQQVFGDNKKFWLIPIGSSPGDGHSFPMRSMNESQNPLLANEEPWEDNEDDSRDYPEGSSSLAVESET.

At 1 to 20 the chain is on the cytoplasmic side; it reads MRRGWKMALSGGLRCCRRVL. Residues 21-41 form a helical membrane-spanning segment; that stretch reads SWVPVLVIVLVVLWSYYAYVF. Topologically, residues 42–56 are lumenal; sequence ELCLVTVLSPAEKVI. The chain crosses the membrane as a helical span at residues 57–77; that stretch reads YLILYHAIFVFFAWTYWKSIF. Residues 78–172 lie on the Cytoplasmic side of the membrane; sequence TLPQQPNQKF…NNCIGFSNYK (95 aa). The DHHC domain occupies 129–179; sequence RFCDRCHLIKPDRCHHCSVCAMCVLKMDHHCPWVNNCIGFSNYKFFLQFLA. C131, C134, H144, C145, C148, C151, and H158 together coordinate Zn(2+). Residue C159 is the S-palmitoyl cysteine intermediate of the active site. C165 is a Zn(2+) binding site. Residues 173 to 193 form a helical membrane-spanning segment; sequence FFLQFLAYSVLYCLYIATTVF. The Lumenal portion of the chain corresponds to 194-210; the sequence is SYFIKYWRGELPSVRSK. The chain crosses the membrane as a helical span at residues 211 to 234; the sequence is FHVLFLLFVACMFFVSLVILFGYH. Topologically, residues 235 to 337 are cytoplasmic; the sequence is CWLVSRNKTT…SSSLAVESET (103 aa). The segment at 293-337 is disordered; it reads HSFPMRSMNESQNPLLANEEPWEDNEDDSRDYPEGSSSLAVESET. Positions 312–321 are enriched in acidic residues; the sequence is EPWEDNEDDS. A compositionally biased stretch (polar residues) spans 327–337; the sequence is GSSSLAVESET.

This sequence belongs to the DHHC palmitoyltransferase family. Autopalmitoylated (in vitro). As to expression, expressed mainly in brain.

Its subcellular location is the golgi apparatus membrane. The protein resides in the postsynaptic density. It catalyses the reaction L-cysteinyl-[protein] + hexadecanoyl-CoA = S-hexadecanoyl-L-cysteinyl-[protein] + CoA. The catalysed reaction is L-cysteinyl-[protein] + tetradecanoyl-CoA = S-tetradecanoyl-L-cysteinyl-[protein] + CoA. The enzyme catalyses L-cysteinyl-[protein] + octadecanoyl-CoA = S-octadecanoyl-L-cysteinyl-[protein] + CoA. With respect to regulation, inhibited by 2-bromopalmitate. In terms of biological role, palmitoyltransferase that catalyzes the addition of palmitate onto various protein substrates. Has no stringent fatty acid selectivity and in addition to palmitate can also transfer onto target proteins myristate from tetradecanoyl-CoA and stearate from octadecanoyl-CoA. Palmitoylates IGF2R and SORT1, promoting their partitioning to an endosomal membrane subdomain where they can interact with the retromer cargo-selective complex. Thereby, regulates retrograde transport from endosomes to the Golgi apparatus of these lysosomal sorting receptors and plays a role in trafficking of lysosomal proteins. In the nervous system, catalyzes the palmitoylation of DLG4/PSD95 and regulates its synaptic clustering and function in synaptogenesis. Could be involved in the differentiation of dopaminergic neurons and the development of the diencephalon. Could also catalyze the palmitoylation of GAP43. Could also palmitoylate DNAJC5 and regulate its localization to the Golgi membrane. Could also palmitoylate FYN as shown in vitro. May palmitoylate CALHM3 subunit of gustatory voltage-gated ion channels and modulate channel gating and kinetics. The protein is Palmitoyltransferase ZDHHC15 of Mus musculus (Mouse).